We begin with the raw amino-acid sequence, 162 residues long: Large ribosomal subunit protein uL10 (162 aa).

The protein belongs to the universal ribosomal protein uL10 family. Part of the ribosomal stalk of the 50S ribosomal subunit. The N-terminus interacts with L11 and the large rRNA to form the base of the stalk. The C-terminus forms an elongated spine to which L12 dimers bind in a sequential fashion forming a multimeric L10(L12)X complex.

Functionally, forms part of the ribosomal stalk, playing a central role in the interaction of the ribosome with GTP-bound translation factors. This is Large ribosomal subunit protein uL10 from Borrelia garinii subsp. bavariensis (strain ATCC BAA-2496 / DSM 23469 / PBi) (Borreliella bavariensis).